Reading from the N-terminus, the 271-residue chain is Probable septum site-determining protein MinC (271 aa).

The interval Arg106–Arg125 is disordered. Residues Ser110–Ala119 show a composition bias toward low complexity.

This sequence belongs to the MinC family. Interacts with MinD and FtsZ.

Its function is as follows. Cell division inhibitor that blocks the formation of polar Z ring septums. Rapidly oscillates between the poles of the cell to destabilize FtsZ filaments that have formed before they mature into polar Z rings. Prevents FtsZ polymerization. The chain is Probable septum site-determining protein MinC from Burkholderia thailandensis (strain ATCC 700388 / DSM 13276 / CCUG 48851 / CIP 106301 / E264).